Consider the following 744-residue polypeptide: Collagen alpha-1(VIII) chain (744 aa).

The N-terminal stretch at 1–27 (MAVQPGPPQLLQVLLTISLGSIRLIQA) is a signal peptide. The tract at residues 29-117 (AYYGIKPLPP…GKEIPLASLR (89 aa)) is nonhelical region (NC2). The span at 101-110 (KEAVPKKGKE) shows a compositional bias: basic and acidic residues. Disordered regions lie at residues 101–434 (KEAV…PGLQ) and 463–584 (EAGH…QGEY). Residues 118–571 (GEQGPRGEPG…PGPPGPPGPP (454 aa)) are triple-helical region. A compositionally biased stretch (pro residues) spans 128-137 (PRGPPGPPGL). Low complexity predominate over residues 168–190 (KPGAMGMPGAKGEIGPKGEIGPM). Gly residues predominate over residues 203-217 (GLPGIGKPGGPGLPG). Pro residues predominate over residues 288–298 (KPGPPGEPGPQ). Over residues 328 to 337 (GFPGGKGEQG) the composition is skewed to gly residues. Residues 389–403 (PGEPGLPGIPGPMGP) are compositionally biased toward pro residues. Positions 411 to 420 (GPKGEGGIVG) are enriched in gly residues. Low complexity-rich tracts occupy residues 469–506 (LPGL…TGPS) and 540–556 (LHGP…QGQP). The segment covering 558–579 (LPGPPGPPGPPGPPAVMPPTPA) has biased composition (pro residues). A nonhelical region (NC1) region spans residues 572–744 (AVMPPTPAPQ…SFSGYLLYPM (173 aa)). A C1q domain is found at 611–744 (PAYEMPAFTA…SFSGYLLYPM (134 aa)).

In terms of assembly, homotrimers, or heterotrimers in association with alpha 2(VIII) type collagens. Four homotrimers can form a tetrahedron stabilized by central interacting C-terminal NC1 trimers. Prolines at the third position of the tripeptide repeating unit (G-X-Y) are hydroxylated in some or all of the chains.

The protein resides in the secreted. It is found in the extracellular space. Its subcellular location is the extracellular matrix. The protein localises to the basement membrane. In terms of biological role, macromolecular component of the subendothelium. Major component of the Descemet's membrane (basement membrane) of corneal endothelial cells. Also a component of the endothelia of blood vessels. Necessary for migration and proliferation of vascular smooth muscle cells and thus, has a potential role in the maintenance of vessel wall integrity and structure, in particular in atherogenesis. In Gallus gallus (Chicken), this protein is Collagen alpha-1(VIII) chain (COL8A1).